The chain runs to 281 residues: Probable protein phosphatase 2C 9 (281 aa).

In terms of domain architecture, PPM-type phosphatase spans 33-280 (KYGFSLVKGK…DDISCVVVRF (248 aa)). Residues D70, G71, D232, and D271 each contribute to the Mn(2+) site.

The protein belongs to the PP2C family. Interacts with phytochromes (via N-terminus). Mg(2+) is required as a cofactor. Mn(2+) serves as cofactor.

Its subcellular location is the nucleus. It catalyses the reaction O-phospho-L-seryl-[protein] + H2O = L-seryl-[protein] + phosphate. It carries out the reaction O-phospho-L-threonyl-[protein] + H2O = L-threonyl-[protein] + phosphate. In terms of biological role, involved in the regulation of phytochrome signaling. May regulate phytochrome-interacting factor 3 (PIF3) through the dephosphorylation of phytochrome. This chain is Probable protein phosphatase 2C 9, found in Arabidopsis thaliana (Mouse-ear cress).